The chain runs to 513 residues: GMP synthase [glutamine-hydrolyzing] (513 aa).

The 198-residue stretch at 3–200 (SVLVLDFGSQ…LLNIAGITPD (198 aa)) folds into the Glutamine amidotransferase type-1 domain. Cys-80 acts as the Nucleophile in catalysis. Residues His-174 and Glu-176 contribute to the active site. In terms of domain architecture, GMPS ATP-PPase spans 201-388 (WSSKSFIDHQ…LGIAEDILMR (188 aa)). 228–234 (SGGVDST) is an ATP binding site.

In terms of assembly, homodimer.

It carries out the reaction XMP + L-glutamine + ATP + H2O = GMP + L-glutamate + AMP + diphosphate + 2 H(+). The protein operates within purine metabolism; GMP biosynthesis; GMP from XMP (L-Gln route): step 1/1. In terms of biological role, catalyzes the synthesis of GMP from XMP. The sequence is that of GMP synthase [glutamine-hydrolyzing] from Chlorobium phaeovibrioides (strain DSM 265 / 1930) (Prosthecochloris vibrioformis (strain DSM 265)).